A 626-amino-acid polypeptide reads, in one-letter code: Chaperone protein DnaK (626 aa).

Thr-197 is subject to Phosphothreonine; by autocatalysis. 2 stretches are compositionally biased toward basic and acidic residues: residues 512 to 528 (DAEA…EAVE) and 539 to 551 (QTEK…GEKI). Disordered regions lie at residues 512–551 (DAEA…GEKI) and 601–626 (DQNA…AEVE).

This sequence belongs to the heat shock protein 70 family.

Functionally, acts as a chaperone. This chain is Chaperone protein DnaK, found in Campylobacter fetus subsp. fetus (strain 82-40).